We begin with the raw amino-acid sequence, 214 residues long: Probable transaldolase (214 aa).

Lysine 83 acts as the Schiff-base intermediate with substrate in catalysis.

Belongs to the transaldolase family. Type 3B subfamily.

Its subcellular location is the cytoplasm. The catalysed reaction is D-sedoheptulose 7-phosphate + D-glyceraldehyde 3-phosphate = D-erythrose 4-phosphate + beta-D-fructose 6-phosphate. It functions in the pathway carbohydrate degradation; pentose phosphate pathway; D-glyceraldehyde 3-phosphate and beta-D-fructose 6-phosphate from D-ribose 5-phosphate and D-xylulose 5-phosphate (non-oxidative stage): step 2/3. In terms of biological role, transaldolase is important for the balance of metabolites in the pentose-phosphate pathway. This Desulfatibacillum aliphaticivorans protein is Probable transaldolase.